Here is a 276-residue protein sequence, read N- to C-terminus: Anthranilate synthase beta subunit 1, chloroplastic (276 aa).

A chloroplast-targeting transit peptide spans 1 to 50; that stretch reads MAASTLYKSCLLQPKSGSTTRRLNPSLVNPLTNPTRVSVLGKSRRDVFAK. One can recognise a Glutamine amidotransferase type-1 domain in the interval 74-273; the sequence is PIIVIDNYDS…IKIVEKKESE (200 aa). Cys152 serves as the catalytic Nucleophile. Catalysis depends on residues His247 and Glu249.

As to quaternary structure, heterotetramer consisting of two non-identical subunits: a beta subunit and a large alpha subunit. In terms of tissue distribution, expressed in the central cylinder of mature primary root zones, including pericycle and early lateral root primordia, and vasculature of cotyledons.

The protein resides in the plastid. Its subcellular location is the chloroplast. The enzyme catalyses chorismate + L-glutamine = anthranilate + pyruvate + L-glutamate + H(+). The protein operates within amino-acid biosynthesis; L-tryptophan biosynthesis; L-tryptophan from chorismate: step 1/5. Functionally, part of a heterotetrameric complex that catalyzes the two-step biosynthesis of anthranilate, an intermediate in the biosynthesis of L-tryptophan. In the first step, the glutamine-binding beta subunit of anthranilate synthase (AS) provides the glutamine amidotransferase activity which generates ammonia as a substrate that, along with chorismate, is used in the second step, catalyzed by the large alpha subunit of AS to produce anthranilate. Plays an important regulatory role in auxin production via the tryptophan-dependent biosynthetic pathway. This chain is Anthranilate synthase beta subunit 1, chloroplastic (ASB1), found in Arabidopsis thaliana (Mouse-ear cress).